A 650-amino-acid polypeptide reads, in one-letter code: Acetyl-coenzyme A synthetase (650 aa).

Residues Arg-191–Arg-194, Thr-311, and Asn-335 contribute to the CoA site. Residues Gly-387–Pro-389, Asp-411–Thr-416, Asp-500, and Arg-515 each bind ATP. Position 523 (Ser-523) interacts with CoA. Arg-526 serves as a coordination point for ATP. Mg(2+)-binding residues include Val-537, His-539, and Val-542. Arg-584 is a binding site for CoA. Residue Lys-609 is modified to N6-acetyllysine.

Belongs to the ATP-dependent AMP-binding enzyme family. It depends on Mg(2+) as a cofactor. In terms of processing, acetylated. Deacetylation by the SIR2-homolog deacetylase activates the enzyme.

It catalyses the reaction acetate + ATP + CoA = acetyl-CoA + AMP + diphosphate. Functionally, catalyzes the conversion of acetate into acetyl-CoA (AcCoA), an essential intermediate at the junction of anabolic and catabolic pathways. AcsA undergoes a two-step reaction. In the first half reaction, AcsA combines acetate with ATP to form acetyl-adenylate (AcAMP) intermediate. In the second half reaction, it can then transfer the acetyl group from AcAMP to the sulfhydryl group of CoA, forming the product AcCoA. The polypeptide is Acetyl-coenzyme A synthetase (Shewanella baltica (strain OS155 / ATCC BAA-1091)).